A 131-amino-acid polypeptide reads, in one-letter code: MLTAMLLSCVLLLALPPTLGVQMGVAPLKGIRRPDQALFPEFPGLSLNGLKKTTADRAEEVLLQKAEALAEVLDPQNRESRSPRRCVRLHESCLGQQVPCCDPCATCYCRFFNAFCYCRKLGTATNLCSRT.

The first 20 residues, 1–20 (MLTAMLLSCVLLLALPPTLG), serve as a signal peptide directing secretion. Residues 21 to 81 (VQMGVAPLKG…VLDPQNRESR (61 aa)) constitute a propeptide that is removed on maturation. Intrachain disulfides connect Cys-86/Cys-101, Cys-93/Cys-107, Cys-100/Cys-118, Cys-104/Cys-128, and Cys-109/Cys-116. Positions 86–128 (CVRLHESCLGQQVPCCDPCATCYCRFFNAFCYCRKLGTATNLC) constitute an Agouti domain. An interaction with melanocortin receptors region spans residues 110 to 112 (RFF).

Interacts with melanocortin receptors MC3R, MC4R and MC5R. Expressed in arcuate nucleus and median eminence, adrenal gland (medulla), hypothalamus, testis, and lung.

Its subcellular location is the secreted. It localises to the golgi apparatus lumen. In terms of biological role, plays a role in weight homeostasis. Involved in the control of feeding behavior through the central melanocortin system. Acts as alpha melanocyte-stimulating hormone antagonist by inhibiting cAMP production mediated by stimulation of melanocortin receptors within the hypothalamus and adrenal gland. Has very low activity with MC5R. Is an inverse agonist for MC3R and MC4R being able to suppress their constitutive activity. It promotes MC3R and MC4R endocytosis in an arrestin-dependent manner. The sequence is that of Agouti-related protein (Agrp) from Mus musculus (Mouse).